The following is a 341-amino-acid chain: Serpentine receptor class epsilon-8 (341 aa).

7 helical membrane-spanning segments follow: residues 37-57 (VGFLVFSWIEFLYLFYLFIFI), 64-86 (LTFLFMNYGGQYFCSMLSRCIIV), 101-123 (WILVANFARTVCLFIAMYILPIF), 143-163 (IWVSLMILSIFHPLVFASAIA), 169-189 (IPVVVHVISFFIVNIIGYIGI), 235-255 (VQISILFFNIGCCSILLMDHF), and 264-284 (WSYVCFNFFALVYGITVPIIL).

Belongs to the nematode receptor-like protein sre family.

The protein localises to the membrane. This is Serpentine receptor class epsilon-8 (sre-8) from Caenorhabditis elegans.